Reading from the N-terminus, the 218-residue chain is MIKLGWASFSNTEFAQDIFIKFANQFYKQDDAGTILFELKKTLGVNQLDEIEKNKKVIIVNQFQNSLGKFLLFNKENTKRINSLANEHISSFLKKIFRLSGFKDMLIDVQHHKKLQKCLLREIHLLVCLINSNQFSDELMQIIEWYQYLKKHSSKLFVITASSDKKPVIEPTINEYKAIFGEYLSSFHLDLKNNQSNDLFQKLLDQIKIKATSKTSLR.

This is an uncharacterized protein from Mycoplasma genitalium (strain ATCC 33530 / DSM 19775 / NCTC 10195 / G37) (Mycoplasmoides genitalium).